Reading from the N-terminus, the 331-residue chain is Glyceraldehyde-3-phosphate dehydrogenase (331 aa).

Residues 12–13 (RI), Asp34, Arg78, and Thr120 contribute to the NAD(+) site. Residues 149–151 (SCT), Thr180, 209–210 (TG), and Arg232 each bind D-glyceraldehyde 3-phosphate. Cys150 functions as the Nucleophile in the catalytic mechanism. Residue Asn314 coordinates NAD(+).

Belongs to the glyceraldehyde-3-phosphate dehydrogenase family. Homotetramer.

The protein localises to the cytoplasm. The enzyme catalyses D-glyceraldehyde 3-phosphate + phosphate + NAD(+) = (2R)-3-phospho-glyceroyl phosphate + NADH + H(+). The protein operates within carbohydrate degradation; glycolysis; pyruvate from D-glyceraldehyde 3-phosphate: step 1/5. Functionally, catalyzes the oxidative phosphorylation of glyceraldehyde 3-phosphate (G3P) to 1,3-bisphosphoglycerate (BPG) using the cofactor NAD. The first reaction step involves the formation of a hemiacetal intermediate between G3P and a cysteine residue, and this hemiacetal intermediate is then oxidized to a thioester, with concomitant reduction of NAD to NADH. The reduced NADH is then exchanged with the second NAD, and the thioester is attacked by a nucleophilic inorganic phosphate to produce BPG. This Escherichia fergusonii (strain ATCC 35469 / DSM 13698 / CCUG 18766 / IAM 14443 / JCM 21226 / LMG 7866 / NBRC 102419 / NCTC 12128 / CDC 0568-73) protein is Glyceraldehyde-3-phosphate dehydrogenase (gapA).